The chain runs to 275 residues: Formamidopyrimidine-DNA glycosylase (275 aa).

The active-site Schiff-base intermediate with DNA is Pro2. Glu3 serves as the catalytic Proton donor. Lys58 (proton donor; for beta-elimination activity) is an active-site residue. His93, Arg111, and Arg156 together coordinate DNA. The FPG-type zinc-finger motif lies at 241 to 275 (FVYDRAGLPCRVCGTPIRQIVQGQRSTYFCPTCQR). Catalysis depends on Arg265, which acts as the Proton donor; for delta-elimination activity.

This sequence belongs to the FPG family. As to quaternary structure, monomer. It depends on Zn(2+) as a cofactor.

The enzyme catalyses Hydrolysis of DNA containing ring-opened 7-methylguanine residues, releasing 2,6-diamino-4-hydroxy-5-(N-methyl)formamidopyrimidine.. The catalysed reaction is 2'-deoxyribonucleotide-(2'-deoxyribose 5'-phosphate)-2'-deoxyribonucleotide-DNA = a 3'-end 2'-deoxyribonucleotide-(2,3-dehydro-2,3-deoxyribose 5'-phosphate)-DNA + a 5'-end 5'-phospho-2'-deoxyribonucleoside-DNA + H(+). Involved in base excision repair of DNA damaged by oxidation or by mutagenic agents. Acts as a DNA glycosylase that recognizes and removes damaged bases. Has a preference for oxidized purines, such as 7,8-dihydro-8-oxoguanine (8-oxoG). Has AP (apurinic/apyrimidinic) lyase activity and introduces nicks in the DNA strand. Cleaves the DNA backbone by beta-delta elimination to generate a single-strand break at the site of the removed base with both 3'- and 5'-phosphates. In Burkholderia ambifaria (strain MC40-6), this protein is Formamidopyrimidine-DNA glycosylase.